The primary structure comprises 278 residues: Dermonecrotic toxin LspiSicTox-betaIE2iii (278 aa).

Residue H5 is part of the active site. E25 and D27 together coordinate Mg(2+). H41 functions as the Nucleophile in the catalytic mechanism. 2 disulfides stabilise this stretch: C45/C51 and C47/C190. Position 85 (D85) interacts with Mg(2+).

It belongs to the arthropod phospholipase D family. Class II subfamily. The cofactor is Mg(2+). In terms of tissue distribution, expressed by the venom gland.

The protein resides in the secreted. The enzyme catalyses an N-(acyl)-sphingosylphosphocholine = an N-(acyl)-sphingosyl-1,3-cyclic phosphate + choline. The catalysed reaction is an N-(acyl)-sphingosylphosphoethanolamine = an N-(acyl)-sphingosyl-1,3-cyclic phosphate + ethanolamine. It catalyses the reaction a 1-acyl-sn-glycero-3-phosphocholine = a 1-acyl-sn-glycero-2,3-cyclic phosphate + choline. It carries out the reaction a 1-acyl-sn-glycero-3-phosphoethanolamine = a 1-acyl-sn-glycero-2,3-cyclic phosphate + ethanolamine. Functionally, dermonecrotic toxins cleave the phosphodiester linkage between the phosphate and headgroup of certain phospholipids (sphingolipid and lysolipid substrates), forming an alcohol (often choline) and a cyclic phosphate. This toxin acts on sphingomyelin (SM). It may also act on ceramide phosphoethanolamine (CPE), lysophosphatidylcholine (LPC) and lysophosphatidylethanolamine (LPE), but not on lysophosphatidylserine (LPS), and lysophosphatidylglycerol (LPG). It acts by transphosphatidylation, releasing exclusively cyclic phosphate products as second products. Induces dermonecrosis, hemolysis, increased vascular permeability, edema, inflammatory response, and platelet aggregation. The chain is Dermonecrotic toxin LspiSicTox-betaIE2iii from Loxosceles spinulosa (Recluse spider).